Here is a 69-residue protein sequence, read N- to C-terminus: Regulatory protein MokC (69 aa).

The helical transmembrane segment at 24–44 threads the bilayer; sequence KAMIVALIVICITAVVAALVT.

The protein belongs to the Hok/Gef family.

The protein resides in the cell inner membrane. In terms of biological role, might be the toxic component of a type I toxin-antitoxin (TA) system. Regulatory peptide which completely overlaps hokC and enables hokC expression. The chain is Regulatory protein MokC (mokC) from Escherichia coli (strain K12).